We begin with the raw amino-acid sequence, 347 residues long: GMP reductase (347 aa).

108–131 (ADFDKMKQILALSPSLKFICIDVA) contacts NADP(+). K(+)-binding residues include glycine 181 and glycine 183. The active-site Thioimidate intermediate is the cysteine 186. 216 to 239 (IVSDGGCSVPGDVAKAFGGGADFV) is an NADP(+) binding site.

It belongs to the IMPDH/GMPR family. GuaC type 1 subfamily. As to quaternary structure, homotetramer.

It carries out the reaction IMP + NH4(+) + NADP(+) = GMP + NADPH + 2 H(+). Its function is as follows. Catalyzes the irreversible NADPH-dependent deamination of GMP to IMP. It functions in the conversion of nucleobase, nucleoside and nucleotide derivatives of G to A nucleotides, and in maintaining the intracellular balance of A and G nucleotides. The chain is GMP reductase from Yersinia pestis bv. Antiqua (strain Antiqua).